A 262-amino-acid polypeptide reads, in one-letter code: Acyl-[acyl-carrier-protein]--UDP-N-acetylglucosamine O-acyltransferase (262 aa).

The protein belongs to the transferase hexapeptide repeat family. LpxA subfamily. Homotrimer.

The protein resides in the cytoplasm. It catalyses the reaction a (3R)-hydroxyacyl-[ACP] + UDP-N-acetyl-alpha-D-glucosamine = a UDP-3-O-[(3R)-3-hydroxyacyl]-N-acetyl-alpha-D-glucosamine + holo-[ACP]. It participates in glycolipid biosynthesis; lipid IV(A) biosynthesis; lipid IV(A) from (3R)-3-hydroxytetradecanoyl-[acyl-carrier-protein] and UDP-N-acetyl-alpha-D-glucosamine: step 1/6. Involved in the biosynthesis of lipid A, a phosphorylated glycolipid that anchors the lipopolysaccharide to the outer membrane of the cell. In Vibrio atlanticus (strain LGP32) (Vibrio splendidus (strain Mel32)), this protein is Acyl-[acyl-carrier-protein]--UDP-N-acetylglucosamine O-acyltransferase.